A 256-amino-acid polypeptide reads, in one-letter code: uncharacterized protein (256 aa).

2 helical membrane passes run C181–V201 and G231–A251.

Its subcellular location is the cell membrane. This is an uncharacterized protein from Methanocaldococcus jannaschii (strain ATCC 43067 / DSM 2661 / JAL-1 / JCM 10045 / NBRC 100440) (Methanococcus jannaschii).